The primary structure comprises 446 residues: Argininosuccinate lyase (446 aa).

Belongs to the lyase 1 family. Argininosuccinate lyase subfamily.

The protein localises to the cytoplasm. It carries out the reaction 2-(N(omega)-L-arginino)succinate = fumarate + L-arginine. Its pathway is amino-acid biosynthesis; L-arginine biosynthesis; L-arginine from L-ornithine and carbamoyl phosphate: step 3/3. This chain is Argininosuccinate lyase, found in Bacteroides thetaiotaomicron (strain ATCC 29148 / DSM 2079 / JCM 5827 / CCUG 10774 / NCTC 10582 / VPI-5482 / E50).